A 139-amino-acid polypeptide reads, in one-letter code: uncharacterized protein (139 aa).

Residues 8-139 (ANLLDHALTK…FLAIIAKLAQ (132 aa)) form the HTH marR-type domain. Positions 53–76 (IKDILKEVTLSPSATTTALNHLEQ) form a DNA-binding region, H-T-H motif.

This is an uncharacterized protein from Bacillus subtilis (strain 168).